The following is a 638-amino-acid chain: Chaperone protein DnaK (638 aa).

Phosphothreonine; by autocatalysis is present on Thr197. The interval 600 to 638 (SGAQGGAQAGPGAGAGQQANQGSSNNKEDIQDADFEEVK) is disordered. Residues 602 to 614 (AQGGAQAGPGAGA) show a composition bias toward gly residues. The segment covering 615-624 (GQQANQGSSN) has biased composition (low complexity). Residues 625–638 (NKEDIQDADFEEVK) show a composition bias toward basic and acidic residues.

It belongs to the heat shock protein 70 family.

Acts as a chaperone. The protein is Chaperone protein DnaK of Phocaeicola vulgatus (strain ATCC 8482 / DSM 1447 / JCM 5826 / CCUG 4940 / NBRC 14291 / NCTC 11154) (Bacteroides vulgatus).